We begin with the raw amino-acid sequence, 524 residues long: BEL1-like homeodomain protein 3 (524 aa).

Residues 171–187 (SRYLKPTQQLLDEVVSV) are SR/KY domain. Basic and acidic residues-rich tracts occupy residues 195-205 (NKKMKNDKGQD) and 216-235 (EDDK…ELQS). Residues 195-236 (NKKMKNDKGQDFHNGSSDNITEDDKSQSQELSPSERQELQSK) are disordered. The segment at 229–300 (ERQELQSKKS…CLRDAIKEQI (72 aa)) is BELL domain. Positions 346-408 (AWRPQRGLPE…NARVRLWKPM (63 aa)) form a DNA-binding region, homeobox. The disordered stretch occupies residues 429-463 (QDTKKMQETSQLKHEDSSSSQQQNQGNNNNNIPYT). A compositionally biased stretch (basic and acidic residues) spans 430 to 445 (DTKKMQETSQLKHEDS). Over residues 446–459 (SSSQQQNQGNNNNN) the composition is skewed to low complexity.

Belongs to the TALE/BELL homeobox family. May form heterodimeric complex with the TALE/KNOX protein STM. Interacts with OFP1, OFP2, OFP3, OFP4, OFP5 and OFP15.

It is found in the nucleus. Transcription factor that is responsive of the nuclear import of SHOOT MERISTEMLESS (STM). The sequence is that of BEL1-like homeodomain protein 3 (BLH3) from Arabidopsis thaliana (Mouse-ear cress).